Reading from the N-terminus, the 153-residue chain is 3-hydroxyacyl-[acyl-carrier-protein] dehydratase FabZ (153 aa).

Residue histidine 57 is part of the active site.

It belongs to the thioester dehydratase family. FabZ subfamily.

The protein resides in the cytoplasm. It catalyses the reaction a (3R)-hydroxyacyl-[ACP] = a (2E)-enoyl-[ACP] + H2O. Involved in unsaturated fatty acids biosynthesis. Catalyzes the dehydration of short chain beta-hydroxyacyl-ACPs and long chain saturated and unsaturated beta-hydroxyacyl-ACPs. In Vibrio cholerae serotype O1 (strain ATCC 39315 / El Tor Inaba N16961), this protein is 3-hydroxyacyl-[acyl-carrier-protein] dehydratase FabZ.